Reading from the N-terminus, the 100-residue chain is Protein alpha-2 (100 aa).

The chain is Protein alpha-2 from Bos taurus (Bovine).